A 138-amino-acid chain; its full sequence is Large ribosomal subunit protein uL16 (138 aa).

Positions 1 to 13 (MLQPKRRKYRKEQ) are enriched in basic residues. The disordered stretch occupies residues 1–20 (MLQPKRRKYRKEQKGRNTGI).

This sequence belongs to the universal ribosomal protein uL16 family. As to quaternary structure, part of the 50S ribosomal subunit.

Its function is as follows. Binds 23S rRNA and is also seen to make contacts with the A and possibly P site tRNAs. The chain is Large ribosomal subunit protein uL16 from Ralstonia nicotianae (strain ATCC BAA-1114 / GMI1000) (Ralstonia solanacearum).